The following is an 836-amino-acid chain: Protein AKNAD1 (836 aa).

Composition is skewed to polar residues over residues Ser159 to Leu172, Ser181 to Glu192, and Ser227 to Lys248. Disordered regions lie at residues Ser159 to Lys248 and Leu303 to Glu325. Over residues Cys311–Ile323 the composition is skewed to basic and acidic residues. Residues Gln372–Lys484 are a coiled coil. Disordered regions lie at residues Ser510–Asn545 and Met575–Glu596.

This sequence belongs to the AKNA family.

This chain is Protein AKNAD1 (AKNAD1), found in Homo sapiens (Human).